Reading from the N-terminus, the 199-residue chain is NAD(P)H quinone oxidoreductase PST3 (199 aa).

One can recognise a Flavodoxin-like domain in the interval 5-193 (VAIIIYSLYH…EIAFIQGKSF (189 aa)). FMN contacts are provided by residues 11–15 (SLYHH) and 111–165 (IFVS…SPYG).

It belongs to the WrbA family. FMN serves as cofactor.

The protein resides in the cell membrane. It carries out the reaction a quinone + NADH + H(+) = a quinol + NAD(+). The catalysed reaction is a quinone + NADPH + H(+) = a quinol + NADP(+). Functionally, flavodoxin-like protein (FLP) that plays a role in cell wall integrity, oxidative stress protection and virulence. FLPs act as NAD(P)H quinone oxidoreductases. Reduces ubiquinone (coenzyme Q), enabling it to serve as an antioxidant in the membrane. The polypeptide is NAD(P)H quinone oxidoreductase PST3 (Candida albicans (strain SC5314 / ATCC MYA-2876) (Yeast)).